Consider the following 82-residue polypeptide: Small ribosomal subunit protein uS17 (82 aa).

Belongs to the universal ribosomal protein uS17 family. In terms of assembly, part of the 30S ribosomal subunit.

Its function is as follows. One of the primary rRNA binding proteins, it binds specifically to the 5'-end of 16S ribosomal RNA. The chain is Small ribosomal subunit protein uS17 from Rhodopseudomonas palustris (strain BisA53).